Consider the following 148-residue polypeptide: MIKEELNLWAEGVEFKHWDAYYNFILSVLNFLCIEEYELSVVLCNNEYIQKLNSAFRQKSEPTDVLSFNYLEENGQINHKIQGDLIISLEYLEFSSLEFNVEMYDELQRNTIHGILHLIGYTHETNDFQNEEMLVIQEKVLRETRRVF.

Positions 113, 117, and 123 each coordinate Zn(2+).

The protein belongs to the endoribonuclease YbeY family. Zn(2+) serves as cofactor.

Its subcellular location is the cytoplasm. In terms of biological role, single strand-specific metallo-endoribonuclease involved in late-stage 70S ribosome quality control and in maturation of the 3' terminus of the 16S rRNA. This chain is Endoribonuclease YbeY, found in Borrelia hermsii (strain HS1 / DAH).